A 212-amino-acid polypeptide reads, in one-letter code: High frequency lysogenization protein HflD homolog (212 aa).

A coiled-coil region spans residues 92–128 (LIALERKLNAKSAALDELGKRIGQLERQLEHFELLSE).

The protein belongs to the HflD family.

It is found in the cytoplasm. It localises to the cell inner membrane. The sequence is that of High frequency lysogenization protein HflD homolog from Pectobacterium atrosepticum (strain SCRI 1043 / ATCC BAA-672) (Erwinia carotovora subsp. atroseptica).